A 148-amino-acid polypeptide reads, in one-letter code: UPF0178 protein BH16190 (148 aa).

This sequence belongs to the UPF0178 family.

The protein is UPF0178 protein BH16190 of Bartonella henselae (strain ATCC 49882 / DSM 28221 / CCUG 30454 / Houston 1) (Rochalimaea henselae).